A 577-amino-acid polypeptide reads, in one-letter code: Methionine--tRNA ligase (577 aa).

A 'HIGH' region motif is present at residues 21 to 31; sequence PYANGPLHVGH. 4 residues coordinate Zn(2+): C153, C156, C166, and C169. A 'KMSKS' region motif is present at residues 355-359; sequence QMSTS. Residue T358 coordinates ATP.

The protein belongs to the class-I aminoacyl-tRNA synthetase family. MetG type 1 subfamily. In terms of assembly, monomer. Requires Zn(2+) as cofactor.

The protein localises to the cytoplasm. It catalyses the reaction tRNA(Met) + L-methionine + ATP = L-methionyl-tRNA(Met) + AMP + diphosphate. Its function is as follows. Is required not only for elongation of protein synthesis but also for the initiation of all mRNA translation through initiator tRNA(fMet) aminoacylation. This Rubrobacter xylanophilus (strain DSM 9941 / JCM 11954 / NBRC 16129 / PRD-1) protein is Methionine--tRNA ligase.